We begin with the raw amino-acid sequence, 338 residues long: Inositol 2-dehydrogenase 4 (338 aa).

Belongs to the Gfo/Idh/MocA family. Homotetramer.

It carries out the reaction myo-inositol + NAD(+) = scyllo-inosose + NADH + H(+). In terms of biological role, involved in the oxidation of myo-inositol (MI) to 2-keto-myo-inositol (2KMI or 2-inosose). The chain is Inositol 2-dehydrogenase 4 from Saccharopolyspora erythraea (strain ATCC 11635 / DSM 40517 / JCM 4748 / NBRC 13426 / NCIMB 8594 / NRRL 2338).